Reading from the N-terminus, the 443-residue chain is 23S rRNA (uracil(1939)-C(5))-methyltransferase RlmD (443 aa).

The 59-residue stretch at 10–68 (RVTTKQTLTVTVNSLDPFGQGVAHHQGKAIFIPGALPGEQAEIELTEQKRQYSRGKLKR) folds into the TRAM domain. [4Fe-4S] cluster-binding residues include Cys-81, Cys-87, Cys-90, and Cys-168. 6 residues coordinate S-adenosyl-L-methionine: Gln-271, Phe-300, Asn-305, Glu-321, Asn-348, and Asp-369. The active-site Nucleophile is Cys-395.

It belongs to the class I-like SAM-binding methyltransferase superfamily. RNA M5U methyltransferase family. RlmD subfamily.

The catalysed reaction is uridine(1939) in 23S rRNA + S-adenosyl-L-methionine = 5-methyluridine(1939) in 23S rRNA + S-adenosyl-L-homocysteine + H(+). Catalyzes the formation of 5-methyl-uridine at position 1939 (m5U1939) in 23S rRNA. This Yersinia enterocolitica serotype O:8 / biotype 1B (strain NCTC 13174 / 8081) protein is 23S rRNA (uracil(1939)-C(5))-methyltransferase RlmD.